Reading from the N-terminus, the 372-residue chain is Cytochrome b (372 aa).

4 helical membrane-spanning segments follow: residues 25–45 (FGSMLLTCLALQTMTGFFLAI), 69–90 (WMMQNLHAIGASMFFICIYIHI), 105–125 (WLSGTTLLIILMATAFFGYVL), and 170–190 (FFALHFILPFTIISMSSIHIM). Heme b is bound by residues histidine 75 and histidine 89. The heme b site is built by histidine 174 and histidine 188. Histidine 193 contributes to the a ubiquinone binding site. Transmembrane regions (helical) follow at residues 218 to 238 (HKDMLMLTIMMTALFIIMSFN), 280 to 300 (LGGAVALVLSVTILMTMPFTH), 312 to 332 (LMQFMFWTLVTTFIMITWAAT), and 339 to 358 (FTTIGQVTSILYFTFFIMNP).

This sequence belongs to the cytochrome b family. As to quaternary structure, the cytochrome bc1 complex contains 3 respiratory subunits (MT-CYB, CYC1 and UQCRFS1), 2 core proteins (UQCRC1 and UQCRC2) and probably 6 low-molecular weight proteins. Heme b is required as a cofactor.

It is found in the mitochondrion inner membrane. Component of the ubiquinol-cytochrome c reductase complex (complex III or cytochrome b-c1 complex) that is part of the mitochondrial respiratory chain. The b-c1 complex mediates electron transfer from ubiquinol to cytochrome c. Contributes to the generation of a proton gradient across the mitochondrial membrane that is then used for ATP synthesis. The chain is Cytochrome b (MT-CYB) from Pantherophis bairdi (Baird's ratsnake).